Reading from the N-terminus, the 248-residue chain is Sugar fermentation stimulation protein homolog (248 aa).

Belongs to the SfsA family.

This Methylorubrum extorquens (strain PA1) (Methylobacterium extorquens) protein is Sugar fermentation stimulation protein homolog.